A 173-amino-acid polypeptide reads, in one-letter code: Inorganic pyrophosphatase (173 aa).

Residues lysine 26, arginine 40, and tyrosine 52 each contribute to the substrate site. Mg(2+)-binding residues include aspartate 62, aspartate 67, and aspartate 99. Residue tyrosine 138 coordinates substrate.

It belongs to the PPase family. Homohexamer. Requires Mg(2+) as cofactor.

Its subcellular location is the cytoplasm. The enzyme catalyses diphosphate + H2O = 2 phosphate + H(+). In terms of biological role, catalyzes the hydrolysis of inorganic pyrophosphate (PPi) forming two phosphate ions. This Sulfolobus acidocaldarius (strain ATCC 33909 / DSM 639 / JCM 8929 / NBRC 15157 / NCIMB 11770) protein is Inorganic pyrophosphatase.